We begin with the raw amino-acid sequence, 657 residues long: tRNA 5-methylaminomethyl-2-thiouridine biosynthesis bifunctional protein MnmC (657 aa).

The tract at residues 1–233 (MPRALEPAEP…KWQMTVASFR (233 aa)) is tRNA (mnm(5)s(2)U34)-methyltransferase. Residues 257-657 (IGAGLAGCAV…LRALRHGHTG (401 aa)) form an FAD-dependent cmnm(5)s(2)U34 oxidoreductase region.

The protein in the N-terminal section; belongs to the methyltransferase superfamily. tRNA (mnm(5)s(2)U34)-methyltransferase family. In the C-terminal section; belongs to the DAO family. Requires FAD as cofactor.

Its subcellular location is the cytoplasm. It catalyses the reaction 5-aminomethyl-2-thiouridine(34) in tRNA + S-adenosyl-L-methionine = 5-methylaminomethyl-2-thiouridine(34) in tRNA + S-adenosyl-L-homocysteine + H(+). Its function is as follows. Catalyzes the last two steps in the biosynthesis of 5-methylaminomethyl-2-thiouridine (mnm(5)s(2)U) at the wobble position (U34) in tRNA. Catalyzes the FAD-dependent demodification of cmnm(5)s(2)U34 to nm(5)s(2)U34, followed by the transfer of a methyl group from S-adenosyl-L-methionine to nm(5)s(2)U34, to form mnm(5)s(2)U34. The chain is tRNA 5-methylaminomethyl-2-thiouridine biosynthesis bifunctional protein MnmC from Cupriavidus necator (strain ATCC 17699 / DSM 428 / KCTC 22496 / NCIMB 10442 / H16 / Stanier 337) (Ralstonia eutropha).